Reading from the N-terminus, the 428-residue chain is MITGVFSMRLWTPVGVLTSLAYCLHQRRVALAELQEADGQCPVDRSLLKLKMVQVVFRHGARSPLKPLPLEEQVEWNPQLLEVPPQTQFDYTVTNLAGGPKPYSPYDSQYHETTLKGGMFAGQLTKVGMQQMFALGERLRKNYVEDIPFLSPTFNPQEVFIRSTNIFRNLESTRCLLAGLFQCQKEGPIIIHTDEADSEVLYPNYQSCWSLRQRTRGRRQTASLQPGISEDLKKVKDRMGIDSSDKVDFFILLDNVAAEQAHNLPSCPMLKRFARMIEQRAVDTSLYILPKEDRESLQMAVGPFLHILESNLLKAMDSATAPDKIRKLYLYAAHDVTFIPLLMTLGIFDHKWPPFAVDLTMELYQHLESKEWFVQLYYHGKEQVPRGCPDGLCPLDMFLNAMSVYTLSPEKYHALCSQTQVMEVGNEE.

The transit peptide at 1 to 32 (MITGVFSMRLWTPVGVLTSLAYCLHQRRVALA) directs the protein to the mitochondrion. Residues 58-168 (RHGARSPLKP…VFIRSTNIFR (111 aa)) are substrate binding. His-59 functions as the Nucleophile in the catalytic mechanism. The Proton donor role is filled by Asp-335.

Belongs to the histidine acid phosphatase family. As to quaternary structure, monomer. As to expression, highly expressed in kidney, heart, small intestine, muscle, liver, prostate, testis, ovary and weakly expressed in thymus and colon.

It localises to the mitochondrion. It carries out the reaction a phosphate monoester + H2O = an alcohol + phosphate. The catalysed reaction is 1-(9Z-octadecenoyl)-sn-glycero-3-phosphate + H2O = 1-(9Z-octadecenoyl)-sn-glycerol + phosphate. Its function is as follows. Hydrolyzes lysophosphatidic acid (LPA) containing a medium length fatty acid chain to the corresponding monoacylglycerol. Has highest activity with lysophosphatidic acid containing myristate (C14:0), monounsaturated oleate (C18:1) or palmitate (C16:0), and lower activity with C18:0 and C6:0 lysophosphatidic acid. The chain is Lysophosphatidic acid phosphatase type 6 (ACP6) from Homo sapiens (Human).